The chain runs to 500 residues: Glycerol kinase (500 aa).

Thr-13 contributes to the ADP binding site. ATP contacts are provided by Thr-13, Thr-14, and Ser-15. Sn-glycerol 3-phosphate is bound at residue Thr-13. Residue Arg-17 coordinates ADP. Sn-glycerol 3-phosphate is bound by residues Arg-83, Glu-84, Tyr-135, and Asp-244. Positions 83, 84, 135, 244, and 245 each coordinate glycerol. 2 residues coordinate ADP: Thr-266 and Gly-309. Residues Thr-266, Gly-309, Gln-313, and Gly-410 each contribute to the ATP site. Gly-410 and Asn-414 together coordinate ADP.

Belongs to the FGGY kinase family.

It carries out the reaction glycerol + ATP = sn-glycerol 3-phosphate + ADP + H(+). It functions in the pathway polyol metabolism; glycerol degradation via glycerol kinase pathway; sn-glycerol 3-phosphate from glycerol: step 1/1. Inhibited by fructose 1,6-bisphosphate (FBP). Its function is as follows. Key enzyme in the regulation of glycerol uptake and metabolism. Catalyzes the phosphorylation of glycerol to yield sn-glycerol 3-phosphate. This is Glycerol kinase from Burkholderia multivorans (strain ATCC 17616 / 249).